A 900-amino-acid chain; its full sequence is Probable 2-oxoadipate dehydrogenase complex component E1 homolog (900 aa).

It belongs to the alpha-ketoglutarate dehydrogenase family. The cofactor is thiamine diphosphate.

Its subcellular location is the mitochondrion. It carries out the reaction N(6)-[(R)-lipoyl]-L-lysyl-[protein] + 2-oxoadipate + H(+) = N(6)-[(R)-S(8)-glutaryldihydrolipoyl]-L-lysyl-[protein] + CO2. Functionally, 2-oxoadipate dehydrogenase (E1a) component of the 2-oxoadipate dehydrogenase complex (OADHC). Participates in the first step, rate limiting for the overall conversion of 2-oxoadipate (alpha-ketoadipate) to glutaryl-CoA and CO(2) catalyzed by the whole OADHC. Catalyzes the irreversible decarboxylation of 2-oxoadipate via the thiamine diphosphate (ThDP) cofactor and subsequent transfer of the decarboxylated acyl intermediate on an oxidized dihydrolipoyl group that is covalently amidated to the E2 enzyme (dihydrolipoyllysine-residue succinyltransferase or DLST). The protein is Probable 2-oxoadipate dehydrogenase complex component E1 homolog (odhA) of Dictyostelium discoideum (Social amoeba).